An 860-amino-acid polypeptide reads, in one-letter code: Alanine--tRNA ligase (860 aa).

4 residues coordinate Zn(2+): His553, His557, Cys655, and His659.

It belongs to the class-II aminoacyl-tRNA synthetase family. Requires Zn(2+) as cofactor.

The protein localises to the cytoplasm. The enzyme catalyses tRNA(Ala) + L-alanine + ATP = L-alanyl-tRNA(Ala) + AMP + diphosphate. In terms of biological role, catalyzes the attachment of alanine to tRNA(Ala) in a two-step reaction: alanine is first activated by ATP to form Ala-AMP and then transferred to the acceptor end of tRNA(Ala). Also edits incorrectly charged Ser-tRNA(Ala) and Gly-tRNA(Ala) via its editing domain. In Legionella pneumophila (strain Paris), this protein is Alanine--tRNA ligase.